We begin with the raw amino-acid sequence, 957 residues long: Glycine dehydrogenase (decarboxylating) (957 aa).

The residue at position 708 (lysine 708) is an N6-(pyridoxal phosphate)lysine.

The protein belongs to the GcvP family. As to quaternary structure, the glycine cleavage system is composed of four proteins: P, T, L and H. Pyridoxal 5'-phosphate is required as a cofactor.

The catalysed reaction is N(6)-[(R)-lipoyl]-L-lysyl-[glycine-cleavage complex H protein] + glycine + H(+) = N(6)-[(R)-S(8)-aminomethyldihydrolipoyl]-L-lysyl-[glycine-cleavage complex H protein] + CO2. The glycine cleavage system catalyzes the degradation of glycine. The P protein binds the alpha-amino group of glycine through its pyridoxal phosphate cofactor; CO(2) is released and the remaining methylamine moiety is then transferred to the lipoamide cofactor of the H protein. In Salmonella arizonae (strain ATCC BAA-731 / CDC346-86 / RSK2980), this protein is Glycine dehydrogenase (decarboxylating).